Consider the following 151-residue polypeptide: Transcriptional regulator MraZ (151 aa).

2 consecutive SpoVT-AbrB domains span residues Ala5–Glu52 and Ala81–Ala124.

The protein belongs to the MraZ family. As to quaternary structure, forms oligomers.

Its subcellular location is the cytoplasm. The protein resides in the nucleoid. This Pseudomonas putida (strain ATCC 700007 / DSM 6899 / JCM 31910 / BCRC 17059 / LMG 24140 / F1) protein is Transcriptional regulator MraZ.